A 55-amino-acid chain; its full sequence is Antiviral protein GAP-31 (55 aa).

Positions 29–55 (KPEGNSHGIPSLRKSSDDPGSSFVVAG) are disordered.

The protein belongs to the ribosome-inactivating protein family. Type 1 RIP subfamily.

It carries out the reaction Endohydrolysis of the N-glycosidic bond at one specific adenosine on the 28S rRNA.. Single-chain ribosome-inactivating protein, possessing high antiviral potency and low toxicity to normal cells in culture and to intact animals. Capable of inhibiting HIV-1 infection and replication. This is Antiviral protein GAP-31 from Suregada multiflora (False lime).